The primary structure comprises 117 residues: Ribosome-binding factor A (117 aa).

It belongs to the RbfA family. In terms of assembly, monomer. Binds 30S ribosomal subunits, but not 50S ribosomal subunits or 70S ribosomes.

The protein resides in the cytoplasm. Its function is as follows. One of several proteins that assist in the late maturation steps of the functional core of the 30S ribosomal subunit. Associates with free 30S ribosomal subunits (but not with 30S subunits that are part of 70S ribosomes or polysomes). Required for efficient processing of 16S rRNA. May interact with the 5'-terminal helix region of 16S rRNA. The protein is Ribosome-binding factor A of Leptospira interrogans serogroup Icterohaemorrhagiae serovar copenhageni (strain Fiocruz L1-130).